Reading from the N-terminus, the 598-residue chain is Polypeptide N-acetylgalactosaminyltransferase 17 (598 aa).

At 1-6 the chain is on the cytoplasmic side; sequence MASLRR. Residues 7 to 27 form a helical; Signal-anchor for type II membrane protein membrane-spanning segment; the sequence is VKVLLVLNLIAVAGFVLFLAK. Topologically, residues 28–598 are lumenal; it reads CRPIAVRSGD…QRWTIKNSIK (571 aa). N-linked (GlcNAc...) asparagine glycosylation is present at asparagine 50. 2 disulfide bridges follow: cysteine 142–cysteine 373 and cysteine 364–cysteine 443. Residues 151-262 are catalytic subdomain A; sequence LPQISIIFIF…AGWAEPVLSR (112 aa). Residues aspartate 192 and arginine 223 each contribute to the substrate site. Mn(2+) is bound by residues aspartate 246, histidine 248, and histidine 378. Positions 319-381 are catalytic subdomain B; it reads PIRTPAMIGC…PCSRVAHIER (63 aa). Residues arginine 381 and tyrosine 386 each contribute to the substrate site. N-linked (GlcNAc...) asparagine glycosylation is found at asparagine 461 and asparagine 486. One can recognise a Ricin B-type lectin domain in the interval 465–594; sequence AYGELRNNKA…SCTGQRWTIK (130 aa). Intrachain disulfides connect cysteine 478–cysteine 494, cysteine 526–cysteine 541, and cysteine 568–cysteine 586.

The protein belongs to the glycosyltransferase 2 family. GalNAc-T subfamily. It depends on Mn(2+) as a cofactor. Highly expressed in brain and heart. Weakly expressed in kidney, liver, lung and spleen.

It is found in the golgi apparatus membrane. The catalysed reaction is L-seryl-[protein] + UDP-N-acetyl-alpha-D-galactosamine = a 3-O-[N-acetyl-alpha-D-galactosaminyl]-L-seryl-[protein] + UDP + H(+). The enzyme catalyses L-threonyl-[protein] + UDP-N-acetyl-alpha-D-galactosamine = a 3-O-[N-acetyl-alpha-D-galactosaminyl]-L-threonyl-[protein] + UDP + H(+). It functions in the pathway protein modification; protein glycosylation. In terms of biological role, may catalyze the initial reaction in O-linked oligosaccharide biosynthesis, the transfer of an N-acetyl-D-galactosamine residue to a serine or threonine residue on the protein receptor. The chain is Polypeptide N-acetylgalactosaminyltransferase 17 from Homo sapiens (Human).